The chain runs to 182 residues: Oligoribonuclease (182 aa).

Positions 7-170 constitute an Exonuclease domain; that stretch reads LIWIDLEMTG…EDIRESVEEL (164 aa). The active site involves Y128.

It belongs to the oligoribonuclease family.

It localises to the cytoplasm. Functionally, 3'-to-5' exoribonuclease specific for small oligoribonucleotides. The protein is Oligoribonuclease of Hahella chejuensis (strain KCTC 2396).